The following is a 458-amino-acid chain: Phosphoglucosamine mutase (458 aa).

Serine 106 (phosphoserine intermediate) is an active-site residue. Serine 106, aspartate 247, aspartate 249, and aspartate 251 together coordinate Mg(2+). A Phosphoserine modification is found at serine 106.

It belongs to the phosphohexose mutase family. It depends on Mg(2+) as a cofactor. Post-translationally, activated by phosphorylation.

The enzyme catalyses alpha-D-glucosamine 1-phosphate = D-glucosamine 6-phosphate. In terms of biological role, catalyzes the conversion of glucosamine-6-phosphate to glucosamine-1-phosphate. This chain is Phosphoglucosamine mutase, found in Chlamydia trachomatis serovar D (strain ATCC VR-885 / DSM 19411 / UW-3/Cx).